Here is a 166-residue protein sequence, read N- to C-terminus: Peptide deformylase (166 aa).

The Fe cation site is built by cysteine 88 and histidine 130. Glutamate 131 is an active-site residue. Histidine 134 lines the Fe cation pocket.

This sequence belongs to the polypeptide deformylase family. Fe(2+) serves as cofactor.

The catalysed reaction is N-terminal N-formyl-L-methionyl-[peptide] + H2O = N-terminal L-methionyl-[peptide] + formate. Its function is as follows. Removes the formyl group from the N-terminal Met of newly synthesized proteins. Requires at least a dipeptide for an efficient rate of reaction. N-terminal L-methionine is a prerequisite for activity but the enzyme has broad specificity at other positions. The polypeptide is Peptide deformylase (Thermoanaerobacter sp. (strain X514)).